The chain runs to 421 residues: ATP-dependent RNA helicase RhlB (421 aa).

Residues 9-37 (QKFSDFALHPKVVEALEKKGFHNCTPIQA) carry the Q motif motif. The 180-residue stretch at 40–219 (LPLTLAGRDV…FEQMNNAEYI (180 aa)) folds into the Helicase ATP-binding domain. 53 to 60 (AQTGTGKT) contacts ATP. The short motif at 165-168 (DEAD) is the DEAD box element. In terms of domain architecture, Helicase C-terminal spans 245–390 (RLLQTLIEEE…VSKYNPDALM (146 aa)). The disordered stretch occupies residues 392 to 421 (DLPKPLRLTRPRTGNGPRRTGAPRNRRRSG). The span at 402 to 414 (PRTGNGPRRTGAP) shows a compositional bias: low complexity.

It belongs to the DEAD box helicase family. RhlB subfamily. As to quaternary structure, component of the RNA degradosome, which is a multiprotein complex involved in RNA processing and mRNA degradation.

The protein resides in the cytoplasm. It carries out the reaction ATP + H2O = ADP + phosphate + H(+). Functionally, DEAD-box RNA helicase involved in RNA degradation. Has RNA-dependent ATPase activity and unwinds double-stranded RNA. This is ATP-dependent RNA helicase RhlB from Escherichia coli O157:H7 (strain EC4115 / EHEC).